A 155-amino-acid polypeptide reads, in one-letter code: Probable tellurium resistance transcriptional regulator TerW (155 aa).

In terms of biological role, involved in tellurite resistance. TerW binds specifically to the potential promoter region of the terZABCDE operon and probably regulates expression of the genes. The polypeptide is Probable tellurium resistance transcriptional regulator TerW (Escherichia coli).